A 434-amino-acid chain; its full sequence is MASSTTASLGFHYETKYVVLSYLGLLSQEKQQGPSPPGVQLDVAPQSLNPEVLLKLKSEIEEELKTLDKEVSEAFTSTGFDCHTSPVFSPANPESSIEDCLAHLGERVSQDLKEPLQKALQTILSQPVTYEAYRECTVETAVHASGWNKLLVPLVLLQHLLLELTRRGQEPLRMLLQFGVMYLEEHAAEFIIQQGGWGSVFSLEPEEEEYPGIIAEDSNDIYILPSDNSGQVSPPESPTVTTSWQSESLPVSLSASQSWHTESLPVSLGPESWQQIAMDPEEVKSLDSSGAGEKSENNSSNSDIVHVEKEEVPEEAFPGAAAPLLTQVPTVEAPEMMRAEKTSPTPSVFVELGEEELEAVTARPEAVERAEGAAQLSEERAGSRKKSHTGEAAAVRGAKSGLPAEGKAVLLFGGAAAVAILAVAVGVALALRRK.

The short motif at 14–30 is the BH4 element; it reads ETKYVVLSYLGLLSQEK. At serine 35 the chain carries Phosphoserine. A BH3 motif is present at residues 97–113; sequence IEDCLAHLGERVSQDLK. Residues 144–154 carry the BH1 motif; sequence ASGWNKLLVPL. Positions 190–203 match the BH2 motif; it reads FIIQQGGWGSVFSL. The interval 224 to 245 is disordered; the sequence is LPSDNSGQVSPPESPTVTTSWQ. Positions 226–245 are enriched in polar residues; that stretch reads SDNSGQVSPPESPTVTTSWQ. The A repeat unit spans residues 243 to 253; sequence SWQSESLPVSL. Serine 256, serine 258, serine 300, serine 343, serine 347, serine 377, and serine 387 each carry phosphoserine. The A; approximate repeat unit spans residues 258 to 268; sequence SWHTESLPVSL. The interval 282-303 is disordered; sequence EVKSLDSSGAGEKSENNSSNSD. The segment at 363–398 is disordered; that stretch reads RPEAVERAEGAAQLSEERAGSRKKSHTGEAAAVRGA. Basic and acidic residues predominate over residues 365–382; the sequence is EAVERAEGAAQLSEERAG. A helical transmembrane segment spans residues 409–429; sequence VLLFGGAAAVAILAVAVGVAL.

It belongs to the Bcl-2 family. Monomer.

The protein resides in the mitochondrion membrane. Its function is as follows. May promote the activation of caspase-3 and apoptosis. The sequence is that of Bcl-2-like protein 13 (Bcl2l13) from Mus musculus (Mouse).